The following is a 760-amino-acid chain: Transferrin receptor protein 1 (760 aa).

Residues 1 to 67 (MMDQARSAFS…KPKRCSGSIC (67 aa)) are Cytoplasmic-facing. The mediates interaction with SH3BP4 stretch occupies residues 1–67 (MMDQARSAFS…KPKRCSGSIC (67 aa)). Ser10 and Ser19 each carry phosphoserine. Position 20 is a phosphotyrosine (Tyr20). The Endocytosis signal motif lies at 20–23 (YTRF). Residue Thr21 is modified to Phosphothreonine. A Phosphoserine modification is found at Ser24. The Stop-transfer sequence signature appears at 58-61 (KPKR). Residues Cys62 and Cys67 are each lipidated (S-palmitoyl cysteine). Residues 68-88 (YGTIAVIVFFLIGFMIGYLGY) form a helical; Signal-anchor for type II membrane protein membrane-spanning segment. Over 89–760 (CKGVEPKTEC…GDVWDIDNEF (672 aa)) the chain is Extracellular. Residue Thr104 is glycosylated (O-linked (GalNAc...) threonine). The PA domain maps to 223–313 (SKAATVTGKL…GTGDPYTPGF (91 aa)). N-linked (GlcNAc...) asparagine glycans are attached at residues Asn251 and Asn317. The tract at residues 569–760 (TMDTYKELIE…GDVWDIDNEF (192 aa)) is ligand-binding. The Cell attachment site; required for binding to transferrin motif lies at 646 to 648 (RGD). The N-linked (GlcNAc...) asparagine glycan is linked to Asn727.

It belongs to the peptidase M28 family. M28B subfamily. In terms of assembly, homodimer; disulfide-linked. Binds one transferrin or HFE molecule per subunit. Binds the HLA class II histocompatibility antigen, DR1. Interacts with SH3BP3. Interacts with STEAP3; facilitates TFRC endocytosis in erythroid precursor cells. Interacts with GRM2. (Microbial infection) Interacts with Guanarito, Junin and Machupo arenavirus glycoprotein complex. As to quaternary structure, (Microbial infection) Interacts with rabies virus protein G. In terms of assembly, (Microbial infection) Interacts with SARS-CoV-2 spike protein S. In terms of processing, stearoylated by ZDHHC6 which inhibits TFRC-mediated activation of the JNK pathway and promotes mitochondrial fragmentation. Stearoylation does not affect iron uptake. Post-translationally, N- and O-glycosylated, phosphorylated and palmitoylated. The serum form is only glycosylated. Proteolytically cleaved on Arg-100 to produce the soluble serum form (sTfR). In terms of processing, palmitoylated on both Cys-62 and Cys-67. Cys-62 seems to be the major site of palmitoylation.

It is found in the cell membrane. Its subcellular location is the melanosome. It localises to the secreted. In terms of biological role, cellular uptake of iron occurs via receptor-mediated endocytosis of ligand-occupied transferrin receptor into specialized endosomes. Endosomal acidification leads to iron release. The apotransferrin-receptor complex is then recycled to the cell surface with a return to neutral pH and the concomitant loss of affinity of apotransferrin for its receptor. Transferrin receptor is necessary for development of erythrocytes and the nervous system. A second ligand, the hereditary hemochromatosis protein HFE, competes for binding with transferrin for an overlapping C-terminal binding site. Positively regulates T and B cell proliferation through iron uptake. Acts as a lipid sensor that regulates mitochondrial fusion by regulating activation of the JNK pathway. When dietary levels of stearate (C18:0) are low, promotes activation of the JNK pathway, resulting in HUWE1-mediated ubiquitination and subsequent degradation of the mitofusin MFN2 and inhibition of mitochondrial fusion. When dietary levels of stearate (C18:0) are high, TFRC stearoylation inhibits activation of the JNK pathway and thus degradation of the mitofusin MFN2. Mediates uptake of NICOL1 into fibroblasts where it may regulate extracellular matrix production. Functionally, (Microbial infection) Acts as a receptor for new-world arenaviruses: Guanarito, Junin and Machupo virus. Its function is as follows. (Microbial infection) Acts as a host entry factor for rabies virus that hijacks the endocytosis of TFRC to enter cells. (Microbial infection) Acts as a host entry factor for SARS-CoV, MERS-CoV and SARS-CoV-2 viruses that hijack the endocytosis of TFRC to enter cells. The polypeptide is Transferrin receptor protein 1 (TFRC) (Homo sapiens (Human)).